The primary structure comprises 290 residues: Forkhead box protein O3B (290 aa).

Disordered regions lie at residues 1–30 (METDLAEMPEKGVLSSQDSPHFQEKSTEEG) and 44–239 (AAAA…SSRR). 2 stretches are compositionally biased toward low complexity: residues 44–59 (AAAAAAPGSRSLRGVH) and 75–91 (RTPAAAGRAAKMAEAPA). At Thr-117 the chain carries Phosphothreonine; by PKB/AKT1. Residues 142 to 153 (IPEEEDDEDDED) are compositionally biased toward acidic residues. Positions 242–290 (WGNLSYADLITRAIESSPDRRLTLSQIYEWMVSCVPYFKDKGNSNSSAG) form a DNA-binding region, fork-head.

Its subcellular location is the cytoplasm. It localises to the cytosol. Transcription factor. The protein is Forkhead box protein O3B of Homo sapiens (Human).